The sequence spans 307 residues: Pyridoxal 5'-phosphate synthase subunit PdxS (307 aa).

D-ribose 5-phosphate is bound at residue Asp37. Residue Lys94 is the Schiff-base intermediate with D-ribose 5-phosphate of the active site. Gly166 contacts D-ribose 5-phosphate. Arg178 lines the D-glyceraldehyde 3-phosphate pocket. Residues Gly227 and 248-249 (GS) each bind D-ribose 5-phosphate.

Belongs to the PdxS/SNZ family. In terms of assembly, in the presence of PdxT, forms a dodecamer of heterodimers.

It carries out the reaction aldehydo-D-ribose 5-phosphate + D-glyceraldehyde 3-phosphate + L-glutamine = pyridoxal 5'-phosphate + L-glutamate + phosphate + 3 H2O + H(+). It functions in the pathway cofactor biosynthesis; pyridoxal 5'-phosphate biosynthesis. In terms of biological role, catalyzes the formation of pyridoxal 5'-phosphate from ribose 5-phosphate (RBP), glyceraldehyde 3-phosphate (G3P) and ammonia. The ammonia is provided by the PdxT subunit. Can also use ribulose 5-phosphate and dihydroxyacetone phosphate as substrates, resulting from enzyme-catalyzed isomerization of RBP and G3P, respectively. This Mycobacterium leprae (strain Br4923) protein is Pyridoxal 5'-phosphate synthase subunit PdxS.